A 390-amino-acid chain; its full sequence is S-adenosylmethionine:tRNA ribosyltransferase-isomerase (390 aa).

Residues 1-22 (MTQPLSQDQHDSSSNMPTDNAE) form a disordered region.

This sequence belongs to the QueA family. As to quaternary structure, monomer.

The protein localises to the cytoplasm. It carries out the reaction 7-aminomethyl-7-carbaguanosine(34) in tRNA + S-adenosyl-L-methionine = epoxyqueuosine(34) in tRNA + adenine + L-methionine + 2 H(+). It participates in tRNA modification; tRNA-queuosine biosynthesis. Functionally, transfers and isomerizes the ribose moiety from AdoMet to the 7-aminomethyl group of 7-deazaguanine (preQ1-tRNA) to give epoxyqueuosine (oQ-tRNA). This chain is S-adenosylmethionine:tRNA ribosyltransferase-isomerase, found in Psychrobacter sp. (strain PRwf-1).